A 228-amino-acid polypeptide reads, in one-letter code: 6-carboxyhexanoate--CoA ligase (228 aa).

Belongs to the BioW family. As to quaternary structure, homodimer. Mg(2+) is required as a cofactor.

It carries out the reaction heptanedioate + ATP + CoA = 6-carboxyhexanoyl-CoA + AMP + diphosphate. It functions in the pathway metabolic intermediate metabolism; pimeloyl-CoA biosynthesis; pimeloyl-CoA from pimelate: step 1/1. Functionally, catalyzes the transformation of pimelate into pimeloyl-CoA with concomitant hydrolysis of ATP to AMP. This Staphylococcus epidermidis (strain ATCC 12228 / FDA PCI 1200) protein is 6-carboxyhexanoate--CoA ligase.